Consider the following 380-residue polypeptide: Cystathionine beta-lyase (380 aa).

The residue at position 196 (Lys196) is an N6-(pyridoxal phosphate)lysine.

Belongs to the trans-sulfuration enzymes family. The cofactor is pyridoxal 5'-phosphate.

It localises to the cytoplasm. It catalyses the reaction L,L-cystathionine + H2O = L-homocysteine + pyruvate + NH4(+). It carries out the reaction an S-substituted L-cysteine + H2O = a thiol + pyruvate + NH4(+). It functions in the pathway amino-acid biosynthesis; L-methionine biosynthesis via de novo pathway; L-homocysteine from L-cystathionine: step 1/1. The enzymatic degradation of amino acids in cheese is believed to generate aroma compounds and therefore to be essential for flavor development. Cystathionine beta-lyase (CBL) can convert cystathionine to homocysteine but is also able to catalyze an alpha, gamma elimination. With methionine as a substrate, it produces volatile sulfur compounds which are important for flavor formation in Gouda cheese. The protein is Cystathionine beta-lyase (metC) of Lactococcus lactis subsp. cremoris (Streptococcus cremoris).